A 309-amino-acid polypeptide reads, in one-letter code: Olfactory receptor 5B2 (309 aa).

The Extracellular portion of the chain corresponds to 1 to 23; the sequence is MENCTEVTKFILLGLTSVPELQI. Residue Asn3 is glycosylated (N-linked (GlcNAc...) asparagine). A helical transmembrane segment spans residues 24-47; sequence PLFILFTFIYLLTLCGNLGMMLLI. Residues 48–55 lie on the Cytoplasmic side of the membrane; sequence LMDSCLHT. A helical membrane pass occupies residues 56–77; it reads PMYFFLSNLSLVDFGYSSAVTP. Over 78 to 98 the chain is Extracellular; that stretch reads KVMAGFLRGDKVISYNACAVQ. Cys95 and Cys187 are disulfide-bonded. The helical transmembrane segment at 99 to 118 threads the bilayer; sequence MFFFVALATVENYLLASMAY. At 119 to 137 the chain is on the cytoplasmic side; sequence DRYAAVCKPLHYTTTMTAS. A helical membrane pass occupies residues 138-156; it reads VGACLALGSYVCGFLNASF. Residues 157–193 lie on the Extracellular side of the membrane; the sequence is HIGGIFSLSFCKSNLVHHFFCDVPAVMALSCSDKHTS. The helical transmembrane segment at 194–217 threads the bilayer; that stretch reads EVILVFMSSFNIFFVLLVIFISYL. Residues 218–234 lie on the Cytoplasmic side of the membrane; that stretch reads FIFITILKMHSAKGHQK. A helical transmembrane segment spans residues 235-257; the sequence is ALSTCASHFTAVSVFYGTVIFIY. The Extracellular portion of the chain corresponds to 258 to 270; the sequence is LQPSSSHSMDTDK. A helical membrane pass occupies residues 271 to 290; sequence MASVFYAMIIPMLNPVVYSL. The Cytoplasmic portion of the chain corresponds to 291–309; sequence RNREVQNAFKKVLRRQKFL.

This sequence belongs to the G-protein coupled receptor 1 family.

The protein localises to the cell membrane. Functionally, odorant receptor. This Homo sapiens (Human) protein is Olfactory receptor 5B2 (OR5B2).